The chain runs to 435 residues: Kynurenine--oxoglutarate transaminase (435 aa).

The substrate site is built by Gly-46 and Asn-198. Lys-262 is modified (N6-(pyridoxal phosphate)lysine). Residue Arg-413 participates in substrate binding.

The protein belongs to the class-I pyridoxal-phosphate-dependent aminotransferase family. In terms of assembly, homodimer. The cofactor is pyridoxal 5'-phosphate.

The protein localises to the cytoplasm. It carries out the reaction L-kynurenine + 2-oxoglutarate = kynurenate + L-glutamate + H2O. It catalyses the reaction 3-phenylpyruvate + L-glutamine = 2-oxoglutaramate + L-phenylalanine. The catalysed reaction is an S-substituted L-cysteine + H2O = a thiol + pyruvate + NH4(+). Its pathway is amino-acid degradation; L-kynurenine degradation; kynurenate from L-kynurenine: step 1/2. Functionally, catalyzes the irreversible transamination of the L-tryptophan metabolite L-kynurenine to form kynurenic acid (KA). Metabolizes the cysteine conjugates of certain halogenated alkenes and alkanes to form reactive metabolites. Catalyzes the beta-elimination of S-conjugates and Se-conjugates of L-(seleno)cysteine, resulting in the cleavage of the C-S or C-Se bond. The protein is Kynurenine--oxoglutarate transaminase (ccbl) of Dictyostelium discoideum (Social amoeba).